A 208-amino-acid polypeptide reads, in one-letter code: Thymidylate kinase (208 aa).

ATP is bound at residue G10–S17.

Belongs to the thymidylate kinase family.

It catalyses the reaction dTMP + ATP = dTDP + ADP. Phosphorylation of dTMP to form dTDP in both de novo and salvage pathways of dTTP synthesis. This is Thymidylate kinase from Bacillus cytotoxicus (strain DSM 22905 / CIP 110041 / 391-98 / NVH 391-98).